A 977-amino-acid chain; its full sequence is uncharacterized protein (977 aa).

The tract at residues 100 to 152 is disordered; it reads ATSPLQQNGKSRDTEKPPSMKEKDLSSNSSSQHDKAFHERVDQGKNKSSTTKY. Composition is skewed to basic and acidic residues over residues 109-124 and 131-144; these read KSRD…EKDL and QHDK…DQGK. Phosphoserine is present on Ser-165. Composition is skewed to polar residues over residues 166–175 and 183–193; these read PGQSVNSLKP and STKSSTSSEMH. Residues 166 to 194 form a disordered region; it reads PGQSVNSLKPNSGDEVPSTKSSTSSEMHT.

This is an uncharacterized protein from Schizosaccharomyces pombe (strain 972 / ATCC 24843) (Fission yeast).